Consider the following 298-residue polypeptide: tRNA dimethylallyltransferase (298 aa).

Residue 16–23 (GPTASGKS) coordinates ATP. Position 18–23 (18–23 (TASGKS)) interacts with substrate. Interaction with substrate tRNA regions lie at residues 41–44 (DSMQ) and 165–169 (QRIVR).

Belongs to the IPP transferase family. As to quaternary structure, monomer. Mg(2+) serves as cofactor.

The catalysed reaction is adenosine(37) in tRNA + dimethylallyl diphosphate = N(6)-dimethylallyladenosine(37) in tRNA + diphosphate. In terms of biological role, catalyzes the transfer of a dimethylallyl group onto the adenine at position 37 in tRNAs that read codons beginning with uridine, leading to the formation of N6-(dimethylallyl)adenosine (i(6)A). This Rhizobium rhizogenes (strain K84 / ATCC BAA-868) (Agrobacterium radiobacter) protein is tRNA dimethylallyltransferase.